Consider the following 132-residue polypeptide: Ribonuclease P protein component (132 aa).

This sequence belongs to the RnpA family. Consists of a catalytic RNA component (M1 or rnpB) and a protein subunit.

The enzyme catalyses Endonucleolytic cleavage of RNA, removing 5'-extranucleotides from tRNA precursor.. In terms of biological role, RNaseP catalyzes the removal of the 5'-leader sequence from pre-tRNA to produce the mature 5'-terminus. It can also cleave other RNA substrates such as 4.5S RNA. The protein component plays an auxiliary but essential role in vivo by binding to the 5'-leader sequence and broadening the substrate specificity of the ribozyme. The polypeptide is Ribonuclease P protein component (Micrococcus luteus (strain ATCC 4698 / DSM 20030 / JCM 1464 / CCM 169 / CCUG 5858 / IAM 1056 / NBRC 3333 / NCIMB 9278 / NCTC 2665 / VKM Ac-2230) (Micrococcus lysodeikticus)).